Here is a 406-residue protein sequence, read N- to C-terminus: Protein phosphatase 2C (406 aa).

Positions 23–274 (RCGSNCVNGY…DNISCMIVQF (252 aa)) constitute a PPM-type phosphatase domain. 4 residues coordinate Mn(2+): Asp-55, Gly-56, Asp-221, and Asp-265.

This sequence belongs to the PP2C family. In terms of assembly, monomer. Requires Mg(2+) as cofactor. Mn(2+) serves as cofactor.

The catalysed reaction is O-phospho-L-seryl-[protein] + H2O = L-seryl-[protein] + phosphate. The enzyme catalyses O-phospho-L-threonyl-[protein] + H2O = L-threonyl-[protein] + phosphate. Functionally, enzyme with a broad specificity. This is Protein phosphatase 2C from Leishmania chagasi.